We begin with the raw amino-acid sequence, 552 residues long: Urocanate hydratase (552 aa).

Residues 49–50 (GG), Gln-127, 173–175 (GMG), Glu-193, Arg-198, 239–240 (NA), 260–264 (QTSAH), 270–271 (YI), and Tyr-319 contribute to the NAD(+) site. The active site involves Cys-407. Residue Gly-489 participates in NAD(+) binding.

This sequence belongs to the urocanase family. Requires NAD(+) as cofactor.

It localises to the cytoplasm. The catalysed reaction is 4-imidazolone-5-propanoate = trans-urocanate + H2O. The protein operates within amino-acid degradation; L-histidine degradation into L-glutamate; N-formimidoyl-L-glutamate from L-histidine: step 2/3. In terms of biological role, catalyzes the conversion of urocanate to 4-imidazolone-5-propionate. This Geobacillus sp. (strain WCH70) protein is Urocanate hydratase.